A 141-amino-acid chain; its full sequence is Calcitonin (141 aa).

A signal peptide spans 1–25 (MGFQKFSPFLALSILVLLQAGSLHA). The propeptide occupies 26–82 (APFRSALESSPADPATLSEDEARLLLAALVQDYVQMKASELEQEQEREGSSLDSPRS). Residue Ser43 is modified to Phosphoserine. Disordered stretches follow at residues 64-85 (SELEQEQEREGSSLDSPRSKRC) and 111-141 (IGVGAPGKKRDMSSDLERDHRPHVSMPQNAN). Cys85 and Cys91 are joined by a disulfide. At Pro116 the chain carries Proline amide. Residues 118–132 (KKRDMSSDLERDHRP) are compositionally biased toward basic and acidic residues.

It belongs to the calcitonin family.

It localises to the secreted. In terms of biological role, calcitonin is a peptide hormone that causes a rapid but short-lived drop in the level of calcium and phosphate in blood by promoting the incorporation of those ions in the bones. Calcitonin function is mediated by the calcitonin receptor/CALCR and the CALCR-RAMP2 (AMYR2) receptor complex. Functionally, katacalcin is a potent plasma calcium-lowering peptide. In Homo sapiens (Human), this protein is Calcitonin.